Here is a 214-residue protein sequence, read N- to C-terminus: Small ribosomal subunit protein uS5 (214 aa).

The S5 DRBM domain occupies 55–118; that stretch reads LKYERLDVGI…RNAKLNITPV (64 aa).

The protein belongs to the universal ribosomal protein uS5 family. As to quaternary structure, part of the 30S ribosomal subunit. Contacts protein S4.

Functionally, with S4 and S12 plays an important role in translational accuracy. This Staphylothermus marinus (strain ATCC 43588 / DSM 3639 / JCM 9404 / F1) protein is Small ribosomal subunit protein uS5.